An 871-amino-acid chain; its full sequence is Ubiquitin carboxyl-terminal hydrolase 8 (871 aa).

Residues 4–99 form the DUSP domain; the sequence is TSPDESPDST…GETGEASVSG (96 aa). The region spanning 279–869 is the USP domain; sequence TGLQNLGNTC…AAYVLFYKRL (591 aa). C288 serves as the catalytic Nucleophile. The interval 615-650 is disordered; sequence ENLENPTEEEATDKTDTDGTTSVEDTNSTDVKETTE. H828 (proton acceptor) is an active-site residue.

It belongs to the peptidase C19 family.

The enzyme catalyses Thiol-dependent hydrolysis of ester, thioester, amide, peptide and isopeptide bonds formed by the C-terminal Gly of ubiquitin (a 76-residue protein attached to proteins as an intracellular targeting signal).. Recognizes and hydrolyzes the peptide bond at the C-terminal Gly of ubiquitin. Involved in the processing of poly-ubiquitin precursors as well as that of ubiquitinated proteins. The sequence is that of Ubiquitin carboxyl-terminal hydrolase 8 (UBP8) from Arabidopsis thaliana (Mouse-ear cress).